The following is a 469-amino-acid chain: Cysteine--tRNA ligase (469 aa).

C29 contributes to the Zn(2+) binding site. The 'HIGH' region motif lies at 31–41 (PTVYNYIHIGN). Zn(2+) is bound by residues C210, H235, and E239. Residues 267 to 271 (KMSKS) carry the 'KMSKS' region motif. K270 is a binding site for ATP.

The protein belongs to the class-I aminoacyl-tRNA synthetase family. Monomer. Requires Zn(2+) as cofactor.

The protein resides in the cytoplasm. It catalyses the reaction tRNA(Cys) + L-cysteine + ATP = L-cysteinyl-tRNA(Cys) + AMP + diphosphate. This Thermosipho melanesiensis (strain DSM 12029 / CIP 104789 / BI429) protein is Cysteine--tRNA ligase.